Here is a 320-residue protein sequence, read N- to C-terminus: o-succinylbenzoate synthase (320 aa).

The active-site Proton donor is Lys-133. Residues Asp-161, Glu-190, and Asp-213 each coordinate Mg(2+). Lys-235 acts as the Proton acceptor in catalysis.

This sequence belongs to the mandelate racemase/muconate lactonizing enzyme family. MenC type 1 subfamily. A divalent metal cation is required as a cofactor.

It carries out the reaction (1R,6R)-6-hydroxy-2-succinyl-cyclohexa-2,4-diene-1-carboxylate = 2-succinylbenzoate + H2O. The protein operates within quinol/quinone metabolism; 1,4-dihydroxy-2-naphthoate biosynthesis; 1,4-dihydroxy-2-naphthoate from chorismate: step 4/7. Its pathway is quinol/quinone metabolism; menaquinone biosynthesis. Its function is as follows. Converts 2-succinyl-6-hydroxy-2,4-cyclohexadiene-1-carboxylate (SHCHC) to 2-succinylbenzoate (OSB). The chain is o-succinylbenzoate synthase from Escherichia coli O81 (strain ED1a).